Consider the following 249-residue polypeptide: MTRYKATISYDGYAFAGFQRQSHARSVQEEIEKTLTRLNKGQAITVHGAGRTDSGVHALGQVIHFDLPYQIDEEKLRFALDTQSPEDIDVISIELVADDFHCRYAKHSKTYEFIVDRGRPKNPMRRHYATHFPYPLDVERMQIAIKKLEGTHDFTGFTASGTSVEDKVRTITEASLIVDETGQFLTFTFSGNGFLYKQIRNMVGTLLKIGNNRMPVEQIALILEKKDRQLAGPTAAPNGLYLKEIRYEE.

Residue aspartate 53 is the Nucleophile of the active site. Tyrosine 111 contacts substrate.

It belongs to the tRNA pseudouridine synthase TruA family. Homodimer.

It carries out the reaction uridine(38/39/40) in tRNA = pseudouridine(38/39/40) in tRNA. Its function is as follows. Formation of pseudouridine at positions 38, 39 and 40 in the anticodon stem and loop of transfer RNAs. This Streptococcus pneumoniae (strain P1031) protein is tRNA pseudouridine synthase A.